The primary structure comprises 456 residues: Ribosomal protein uS12 methylthiotransferase RimO (456 aa).

In terms of domain architecture, MTTase N-terminal spans 11–126 (PKVGFVSLGC…VMQAVHTHLP (116 aa)). Positions 20, 56, 85, 157, 161, and 164 each coordinate [4Fe-4S] cluster. Residues 143-384 (LTPKHYAYLK…MEVAEEVSAR (242 aa)) form the Radical SAM core domain. In terms of domain architecture, TRAM spans 387–456 (QRKVGQTLRV…DGHDLWGEVA (70 aa)).

It belongs to the methylthiotransferase family. RimO subfamily. Requires [4Fe-4S] cluster as cofactor.

It is found in the cytoplasm. It catalyses the reaction L-aspartate(89)-[ribosomal protein uS12]-hydrogen + (sulfur carrier)-SH + AH2 + 2 S-adenosyl-L-methionine = 3-methylsulfanyl-L-aspartate(89)-[ribosomal protein uS12]-hydrogen + (sulfur carrier)-H + 5'-deoxyadenosine + L-methionine + A + S-adenosyl-L-homocysteine + 2 H(+). Its function is as follows. Catalyzes the methylthiolation of an aspartic acid residue of ribosomal protein uS12. This is Ribosomal protein uS12 methylthiotransferase RimO from Cupriavidus metallidurans (strain ATCC 43123 / DSM 2839 / NBRC 102507 / CH34) (Ralstonia metallidurans).